Reading from the N-terminus, the 443-residue chain is Oxygen-dependent coproporphyrinogen-III oxidase, mitochondrial (443 aa).

The transit peptide at 1–98 directs the protein to the mitochondrion; the sequence is MALRLGQLGS…EMVPKSSGAR (98 aa). The disordered stretch occupies residues 90-111; that stretch reads MVPKSSGARSPSPGRLEEDGDE. S101 bears the Phosphoserine mark. Positions 182–191 are important for dimerization; it reads VLQDGRVFEK. S233 contributes to the coproporphyrinogen III binding site. Catalysis depends on H247, which acts as the Proton donor. 249–251 contributes to the coproporphyrinogen III binding site; that stretch reads NYR. Residues 381 to 417 are important for dimerization; it reads YVEFNLVYDRGTKFGLFTPGSRIESILMSLPLTARWE. K393 carries the post-translational modification N6-acetyllysine; alternate. Position 393 is an N6-succinyllysine; alternate (K393). 400-402 is a coproporphyrinogen III binding site; it reads GSR.

This sequence belongs to the aerobic coproporphyrinogen-III oxidase family. Homodimer.

Its subcellular location is the mitochondrion intermembrane space. The catalysed reaction is coproporphyrinogen III + O2 + 2 H(+) = protoporphyrinogen IX + 2 CO2 + 2 H2O. It participates in porphyrin-containing compound metabolism; protoporphyrin-IX biosynthesis; protoporphyrinogen-IX from coproporphyrinogen-III (O2 route): step 1/1. In terms of biological role, involved in the heme biosynthesis. Catalyzes the aerobic oxidative decarboxylation of propionate groups of rings A and B of coproporphyrinogen-III to yield the vinyl groups in protoporphyrinogen-IX. The polypeptide is Oxygen-dependent coproporphyrinogen-III oxidase, mitochondrial (Rattus norvegicus (Rat)).